The primary structure comprises 261 residues: Gap junction beta-6 protein (261 aa).

At 1–22 the chain is on the cytoplasmic side; that stretch reads MDWGTLHTFIGGVNKHSTSIGK. A helical membrane pass occupies residues 23 to 45; it reads VWITVIFIFRVMILVVAAQEVWG. At 46-75 the chain is on the extracellular side; sequence DEQEDFVCNTLQPGCKNVCYDHFFPVSHIR. Residues 76–98 form a helical membrane-spanning segment; it reads LWALQLIFVSTPALLVAMHVAYY. The Cytoplasmic portion of the chain corresponds to 99–131; sequence RHETTRKFRRGEKRNDFKDIEDIKKQKVRIEGS. A helical transmembrane segment spans residues 132–154; it reads LWWTYTSSIFFRIIFEAAFMYVF. The Extracellular portion of the chain corresponds to 155–192; the sequence is YFLYNGYHLPWVLKCGIDPCPNLVDCFISRPTEKTVFT. A helical transmembrane segment spans residues 193–215; sequence IFMISASVICMLLNVAELCYLLL. The Cytoplasmic segment spans residues 216–261; the sequence is KVCFRRSKRAQTQKNHPNHALKESKQNEMNELISDSGQNAITGFPS.

The protein belongs to the connexin family. Beta-type (group I) subfamily. In terms of assembly, a connexon is composed of a hexamer of connexins. Interacts with CNST.

Its subcellular location is the cell membrane. It is found in the cell junction. It localises to the gap junction. Its function is as follows. One gap junction consists of a cluster of closely packed pairs of transmembrane channels, the connexons, through which materials of low MW diffuse from one cell to a neighboring cell. This Homo sapiens (Human) protein is Gap junction beta-6 protein (GJB6).